The chain runs to 330 residues: Glycerol-3-phosphate dehydrogenase [NAD(P)+] (330 aa).

NADPH contacts are provided by S10, W11, R31, and K105. Positions 105, 135, and 137 each coordinate sn-glycerol 3-phosphate. NADPH is bound at residue A139. Positions 190, 243, 253, 254, and 255 each coordinate sn-glycerol 3-phosphate. The active-site Proton acceptor is the K190. An NADPH-binding site is contributed by R254. NADPH is bound by residues V278 and E280.

It belongs to the NAD-dependent glycerol-3-phosphate dehydrogenase family.

It is found in the cytoplasm. It catalyses the reaction sn-glycerol 3-phosphate + NAD(+) = dihydroxyacetone phosphate + NADH + H(+). It carries out the reaction sn-glycerol 3-phosphate + NADP(+) = dihydroxyacetone phosphate + NADPH + H(+). Its pathway is membrane lipid metabolism; glycerophospholipid metabolism. Catalyzes the reduction of the glycolytic intermediate dihydroxyacetone phosphate (DHAP) to sn-glycerol 3-phosphate (G3P), the key precursor for phospholipid synthesis. This is Glycerol-3-phosphate dehydrogenase [NAD(P)+] from Nitratidesulfovibrio vulgaris (strain DP4) (Desulfovibrio vulgaris).